The primary structure comprises 541 residues: Membrane protein insertase YidC (541 aa).

A run of 6 helical transmembrane segments spans residues Asn-6 to Asp-26, Leu-325 to Phe-345, Phe-349 to Phe-369, Gly-420 to Leu-440, Leu-457 to Met-477, and Val-500 to Gly-520.

This sequence belongs to the OXA1/ALB3/YidC family. Type 1 subfamily. Interacts with the Sec translocase complex via SecD. Specifically interacts with transmembrane segments of nascent integral membrane proteins during membrane integration.

It localises to the cell inner membrane. Functionally, required for the insertion and/or proper folding and/or complex formation of integral membrane proteins into the membrane. Involved in integration of membrane proteins that insert both dependently and independently of the Sec translocase complex, as well as at least some lipoproteins. Aids folding of multispanning membrane proteins. The chain is Membrane protein insertase YidC from Shewanella sp. (strain W3-18-1).